A 518-amino-acid chain; its full sequence is Pre-glycoprotein polyprotein GP complex (518 aa).

A lipid anchor (N-myristoyl glycine; by host) is attached at Gly-2. At 2–17 the chain is on the extracellular side; it reads GQVIGFFQSLPNIINE. Residues 18 to 33 traverse the membrane as a helical segment; that stretch reads ALNIALICVALIAILK. Residues 34-58 lie on the Cytoplasmic side of the membrane; that stretch reads GIVNIWKSGLIQLFIFLILAGRSCS. Cys-57 provides a ligand contact to Zn(2+). The Extracellular portion of the chain corresponds to 59-456; that stretch reads HTFQIGRNHE…QGSTPLSLVD (398 aa). Intrachain disulfides connect Cys-87–Cys-258, Cys-303–Cys-316, Cys-325–Cys-334, and Cys-388–Cys-409. N-linked (GlcNAc...) asparagine; by host glycans are attached at residues Asn-90, Asn-112, Asn-127, Asn-180, and Asn-251. Asn-389, Asn-397, Asn-414, and Asn-419 each carry an N-linked (GlcNAc...) asparagine; by host glycan. The helical transmembrane segment at 457 to 477 threads the bilayer; sequence LCFWSTLFYVTTLFAHLVGFP. Residues 478–518 are Cytoplasmic-facing; the sequence is THRHILDGPCPKPHRLTKKGICSCGHFGIPGKPVRWVKRSR. 6 residues coordinate Zn(2+): His-479, His-481, Cys-487, His-491, Cys-499, and Cys-501.

The protein belongs to the arenaviridae GPC protein family. In terms of assembly, interacts with glycoprotein G2. Part of the GP complex (GP-C) together with glycoprotein G1 and glycoprotein G2. The GP-complex interacts with protein Z, which interacts with ribonucleocapsid; these interactions may induce virion budding. As to quaternary structure, homotrimer; disulfide-linked. In pre-fusion state, G1 homotrimers bind G2 homotrimers via ionic interactions. Part of the GP complex (GP-C) together with glycoprotein G2 and the stable signal peptide. The GP-complex interacts with protein Z, which interacts with ribonucleocapsid; these interactions may induce virion budding. Homotrimer. Interacts with the stable signal peptide. In pre-fusion state, G2 homotrimers bind G1 homotrimers via ionic interactions. Part of the GP complex (GP-C) together with glycoprotein G1 and the stable signal peptide. Acidification in the endosome triggers rearrangements, which ultimately leads to a 6 helix bundle formed by the two heptad repeat domains (HR1 and HR2) in post-fusion state. The GP-complex interacts with protein Z, which interacts with ribonucleocapsid; these interactions may induce virion budding. In terms of processing, specific enzymatic cleavages in vivo yield mature proteins. GP-C polyprotein is cleaved in the endoplasmic reticulum by the host protease MBTPS1. Only cleaved glycoprotein is incorporated into virions. The SSP remains stably associated with the GP complex following cleavage by signal peptidase and plays crucial roles in the trafficking of GP through the secretory pathway. Post-translationally, myristoylation is necessary for GP2-mediated fusion activity.

The protein resides in the virion membrane. It localises to the host endoplasmic reticulum membrane. The protein localises to the host Golgi apparatus membrane. It is found in the host cell membrane. In terms of biological role, functions as a cleaved signal peptide that is retained as the third component of the GP complex (GP-C). Helps to stabilize the spike complex in its native conformation. The SSP is required for efficient glycoprotein expression, post-translational maturation cleavage of G1 and G2, glycoprotein transport to the cell surface plasma membrane, formation of infectious virus particles, and acid pH-dependent glycoprotein-mediated cell fusion. Forms the virion spikes together with glycoprotein G2. The glycoprotein spike trimers are connected to the underlying matrix. Mediates virus attachment to host receptor alpha-dystroglycan DAG1. This attachment induces virion internalization predominantly through clathrin- and caveolin-independent endocytosis. Its function is as follows. Forms the virion spikes together with glycoprotein G1. The glycoprotein spike trimers are connected to the underlying matrix. Class I viral fusion protein that directs fusion of viral and host endosomal membranes, leading to delivery of the nucleocapsid into the cytoplasm. Membrane fusion is mediated by irreversible conformational changes induced by acidification. The chain is Pre-glycoprotein polyprotein GP complex from Bolomys (OLVV).